Consider the following 170-residue polypeptide: Ubiquitin-conjugating enzyme E2 2 (170 aa).

Positions 4-150 constitute a UBC core domain; it reads PARRRLMRDF…VKETVEKSWE (147 aa). The active-site Glycyl thioester intermediate is cysteine 88. The disordered stretch occupies residues 148 to 170; the sequence is SWEDDLKDMDDGDDDDDDDDDDD. Positions 152–170 are enriched in acidic residues; the sequence is DLKDMDDGDDDDDDDDDDD.

The protein belongs to the ubiquitin-conjugating enzyme family.

The protein resides in the cytoplasm. It localises to the nucleus. It carries out the reaction S-ubiquitinyl-[E1 ubiquitin-activating enzyme]-L-cysteine + [E2 ubiquitin-conjugating enzyme]-L-cysteine = [E1 ubiquitin-activating enzyme]-L-cysteine + S-ubiquitinyl-[E2 ubiquitin-conjugating enzyme]-L-cysteine.. It functions in the pathway protein modification; protein ubiquitination. Its function is as follows. Catalyzes the covalent attachment of ubiquitin to other proteins. Plays a role in transcription regulation by catalyzing the monoubiquitination of histone H2B to form H2BK123ub1. H2BK123ub1 gives a specific tag for epigenetic transcriptional activation and is also a prerequisite for H3K4me and H3K79me formation. Also involved in postreplication repair of UV-damaged DNA, in N-end rule-dependent protein degradation and in sporulation. This is Ubiquitin-conjugating enzyme E2 2 (UBC2) from Eremothecium gossypii (strain ATCC 10895 / CBS 109.51 / FGSC 9923 / NRRL Y-1056) (Yeast).